We begin with the raw amino-acid sequence, 348 residues long: Heat-inducible transcription repressor HrcA (348 aa).

It belongs to the HrcA family.

Its function is as follows. Negative regulator of class I heat shock genes (grpE-dnaK-dnaJ and groELS operons). Prevents heat-shock induction of these operons. The protein is Heat-inducible transcription repressor HrcA of Thermomicrobium roseum (strain ATCC 27502 / DSM 5159 / P-2).